A 458-amino-acid polypeptide reads, in one-letter code: BTB/POZ domain-containing protein At5g41330 (458 aa).

Positions Asn11–Ser72 constitute a BTB domain. WD repeat units follow at residues Asp259–Glu305, Leu360–Asn399, and Ser421–Ile458.

Its pathway is protein modification; protein ubiquitination. In terms of biological role, may act as a substrate-specific adapter of an E3 ubiquitin-protein ligase complex (CUL3-RBX1-BTB) which mediates the ubiquitination and subsequent proteasomal degradation of target proteins. In Arabidopsis thaliana (Mouse-ear cress), this protein is BTB/POZ domain-containing protein At5g41330.